The chain runs to 402 residues: Septin CDC11 (402 aa).

Residue Met1 is modified to N-acetylmethionine. The residue at position 4 (Ser4) is a Phosphoserine. Residues 14-21 (RKRKTLKK) carry the Basic motif motif. Residues 21-307 (KSINFSIMII…ENYRTEALSG (287 aa)) form the Septin-type G domain. Positions 31–38 (GESGSGRS) are G1 motif. 31–38 (GESGSGRS) serves as a coordination point for GTP. The tract at residues 89–92 (DTPN) is G3 motif. A G4 motif region spans residues 171–174 (SKAD). GTP is bound by residues 172-180 (KADSLTPKE) and Gly233. A coiled-coil region spans residues 318–376 (AKQEISESDYLMKEEQIKLEEERLRKFEERVHQDLINKRKELLERENELKEIEKRLLAE). Phosphoserine; by CDC28 is present on Ser394. Ser395 bears the Phosphoserine; by GIN4 mark.

This sequence belongs to the TRAFAC class TrmE-Era-EngA-EngB-Septin-like GTPase superfamily. Septin GTPase family. In terms of assembly, component of the septin complex which consists of CDC3, CDC10, CDC11, CDC12 and probably SEP7. The purified septin complex appeared to have a stoichiometry of 2 CDC3, 1 to 2 CDC10, 1 CDC11, 2 CDC12, and 1 or none SEP7 subunit. Interacts with HSL1. Hyphal induction causes immediate phosphorylation at Ser-395 by GIN4 and at Ser-394 by CDC28-CCN1. GIN4 phosphorylation at Ser-395 primes CDC11 for further phosphorylation by CDC28-CCN1. CDC28-HGC1 then maintains CDC11 phosphorylation throughout hyphal growth. Ser-4 is also phosphorylated in yeast cells but not hyphal cells. In terms of processing, met-1 is acetylated.

The protein resides in the bud neck. Septins are GTPases involved in cytokinesis that assemble early in the cell cycle as a patch at the incipient bud site and form a ring before bud emergence, which transforms into an hour-glass shaped collar of cortical filaments that spans both sides of the mother-bud neck. This collar persists until just before cytokinesis, when it splits into two rings that occupy opposite sides of the neck. The septins at the bud neck serve as a structural scaffold that recruits different components involved in diverse processes at specific stages during the cell cycle. Many proteins bind asymmetrically to the septin collar. The septin assembly is regulated by protein kinase GIN4. Septins are also involved in cell morphogenesis, chlamydospores morphogenesis, bud site selection, chitin deposition, cell cycle regulation, cell compartmentalization, and spore wall formation. CDC11 is required for the correct localization of SEC3 at bud tips and bud necks. Plays a key role in invasive growth and virulence. The sequence is that of Septin CDC11 (CDC11) from Candida albicans (strain SC5314 / ATCC MYA-2876) (Yeast).